Reading from the N-terminus, the 192-residue chain is Peptidyl-tRNA hydrolase (192 aa).

A tRNA-binding site is contributed by Tyr-17. His-22 acts as the Proton acceptor in catalysis. TRNA contacts are provided by Phe-68, Asn-70, and Asn-116.

Belongs to the PTH family. As to quaternary structure, monomer.

The protein localises to the cytoplasm. The enzyme catalyses an N-acyl-L-alpha-aminoacyl-tRNA + H2O = an N-acyl-L-amino acid + a tRNA + H(+). Hydrolyzes ribosome-free peptidyl-tRNAs (with 1 or more amino acids incorporated), which drop off the ribosome during protein synthesis, or as a result of ribosome stalling. Functionally, catalyzes the release of premature peptidyl moieties from peptidyl-tRNA molecules trapped in stalled 50S ribosomal subunits, and thus maintains levels of free tRNAs and 50S ribosomes. This chain is Peptidyl-tRNA hydrolase, found in Xylella fastidiosa (strain M12).